A 145-amino-acid polypeptide reads, in one-letter code: Small ribosomal subunit protein uS9 (145 aa).

Belongs to the universal ribosomal protein uS9 family.

It localises to the cytoplasm. The protein is Small ribosomal subunit protein uS9 (RPS16) of Fritillaria agrestis (Stinkbells).